The chain runs to 305 residues: UDP-3-O-acyl-N-acetylglucosamine deacetylase (305 aa).

3 residues coordinate Zn(2+): histidine 78, histidine 237, and aspartate 241. The Proton donor role is filled by histidine 264.

This sequence belongs to the LpxC family. Requires Zn(2+) as cofactor.

The enzyme catalyses a UDP-3-O-[(3R)-3-hydroxyacyl]-N-acetyl-alpha-D-glucosamine + H2O = a UDP-3-O-[(3R)-3-hydroxyacyl]-alpha-D-glucosamine + acetate. It functions in the pathway glycolipid biosynthesis; lipid IV(A) biosynthesis; lipid IV(A) from (3R)-3-hydroxytetradecanoyl-[acyl-carrier-protein] and UDP-N-acetyl-alpha-D-glucosamine: step 2/6. Catalyzes the hydrolysis of UDP-3-O-myristoyl-N-acetylglucosamine to form UDP-3-O-myristoylglucosamine and acetate, the committed step in lipid A biosynthesis. This Dechloromonas aromatica (strain RCB) protein is UDP-3-O-acyl-N-acetylglucosamine deacetylase.